Here is a 206-residue protein sequence, read N- to C-terminus: Thymidylate kinase (206 aa).

10–17 lines the ATP pocket; it reads GVDGVGKT.

The protein belongs to the thymidylate kinase family.

It catalyses the reaction dTMP + ATP = dTDP + ADP. Phosphorylation of dTMP to form dTDP in both de novo and salvage pathways of dTTP synthesis. This Bifidobacterium longum (strain DJO10A) protein is Thymidylate kinase.